Reading from the N-terminus, the 421-residue chain is Alpha-tubulin N-acetyltransferase 1 (421 aa).

An N-acetyltransferase domain is found at 1-190; it reads MEFPFDVDAL…NNFVIFEGFF (190 aa). Position 56 is an N6-acetyllysine; by autocatalysis (Lys-56). Residue 124–137 coordinates acetyl-CoA; sequence FYIHESVQRHGHGR. Lys-146 is subject to N6-acetyllysine; by autocatalysis. 160–169 is an acetyl-CoA binding site; it reads SQKLLKFLNK. The disordered stretch occupies residues 196–235; the sequence is PPAPSLRATRHSRAAAVDPTPAAPARKLPPKRAEGDIKPY. Residues 209 to 221 show a composition bias toward low complexity; that stretch reads AAAVDPTPAAPAR. Positions 226–235 are enriched in basic and acidic residues; that stretch reads KRAEGDIKPY. An N6-acetyllysine; by autocatalysis mark is found at Lys-233 and Lys-244. Residues 252–284 are disordered; that stretch reads PLNRAPRRATPPAHPPPRSSSLGNSPERGPLRP. Phosphoserine is present on residues Ser-272 and Ser-276. The residue at position 305 (Arg-305) is an Asymmetric dimethylarginine. A disordered region spans residues 306–402; that stretch reads LLLAADPGGS…PAQSWTVGGD (97 aa). Residue Ser-315 is modified to Phosphoserine. At Arg-323 the chain carries Omega-N-methylarginine. Polar residues predominate over residues 342 to 354; the sequence is VNSSSPNTGNQDS. Basic and acidic residues predominate over residues 355 to 367; it reads KQGEQETKNRSAS.

It belongs to the acetyltransferase ATAT1 family. In terms of assembly, component of the BBSome complex. Interacts with AP2 alpha-adaptins, including AP2A2, but not with AP1 gamma-adaptin (AP1G1/AP1G2); this interaction is required for efficient alpha-tubulin acetylation, hence clathrin-coated pits are sites of microtubule acetylation. Post-translationally, autoacetylation strongly increases tubulin acetylation.

The protein resides in the cytoplasm. Its subcellular location is the membrane. The protein localises to the clathrin-coated pit. It is found in the cell junction. It localises to the focal adhesion. The protein resides in the cell projection. Its subcellular location is the axon. The protein localises to the cytoskeleton. It is found in the spindle. It catalyses the reaction L-lysyl-[alpha-tubulin] + acetyl-CoA = N(6)-acetyl-L-lysyl-[alpha-tubulin] + CoA + H(+). In terms of biological role, specifically acetylates 'Lys-40' in alpha-tubulin on the lumenal side of microtubules. Promotes microtubule destabilization and accelerates microtubule dynamics; this activity may be independent of acetylation activity. Acetylates alpha-tubulin with a slow enzymatic rate, due to a catalytic site that is not optimized for acetyl transfer. Enters the microtubule through each end and diffuses quickly throughout the lumen of microtubules. Acetylates only long/old microtubules because of its slow acetylation rate since it does not have time to act on dynamically unstable microtubules before the enzyme is released. Required for normal sperm flagellar function. Promotes directional cell locomotion and chemotaxis, through AP2A2-dependent acetylation of alpha-tubulin at clathrin-coated pits that are concentrated at the leading edge of migrating cells. May facilitate primary cilium assembly. In Homo sapiens (Human), this protein is Alpha-tubulin N-acetyltransferase 1.